The following is a 72-amino-acid chain: SRY-related protein AES6 (72 aa).

Residues 1–69 (VKRPMNAFMV…KHMADYPDYK (69 aa)) constitute a DNA-binding region (HMG box).

The protein resides in the nucleus. This Alligator mississippiensis (American alligator) protein is SRY-related protein AES6.